The sequence spans 641 residues: Soluble starch synthase 1, chloroplastic/amyloplastic (641 aa).

A chloroplast-targeting transit peptide spans 1-113 (MATAAGMGIG…DSIDKTIFVA (113 aa)). The tract at residues 62–96 (TFLVPTSTPPAPTQSPAPAPTPPPLPDSGVGEIEP) is disordered. Positions 68–87 (STPPAPTQSPAPAPTPPPLP) are enriched in pro residues. K147 contacts ADP-alpha-D-glucose.

This sequence belongs to the glycosyltransferase 1 family. Bacterial/plant glycogen synthase subfamily. In terms of tissue distribution, leaves and immature seeds.

It localises to the plastid. The protein resides in the chloroplast. The protein localises to the amyloplast. It carries out the reaction [(1-&gt;4)-alpha-D-glucosyl](n) + ADP-alpha-D-glucose = [(1-&gt;4)-alpha-D-glucosyl](n+1) + ADP + H(+). The protein operates within glycan biosynthesis; starch biosynthesis. In terms of biological role, involved in starch synthesis in endosperm amyloplasts. Plays a role in the elongation of amylopectin chains. Synthesizes preferentially amylopectin chains with a degree of polymerization (DP) of 7 to 11 by elongating chains with a DP of 4 to 7. Generates distincly chains with a DP of 8 to 12 chains from short chains with a DP of 6 to 7. The chain is Soluble starch synthase 1, chloroplastic/amyloplastic from Oryza sativa subsp. japonica (Rice).